The primary structure comprises 256 residues: Deoxyribose-phosphate aldolase (256 aa).

Asp102 acts as the Proton donor/acceptor in catalysis. Residue Lys165 is the Schiff-base intermediate with acetaldehyde of the active site. Lys197 serves as the catalytic Proton donor/acceptor.

Belongs to the DeoC/FbaB aldolase family. DeoC type 2 subfamily.

It is found in the cytoplasm. It catalyses the reaction 2-deoxy-D-ribose 5-phosphate = D-glyceraldehyde 3-phosphate + acetaldehyde. Its pathway is carbohydrate degradation; 2-deoxy-D-ribose 1-phosphate degradation; D-glyceraldehyde 3-phosphate and acetaldehyde from 2-deoxy-alpha-D-ribose 1-phosphate: step 2/2. Its function is as follows. Catalyzes a reversible aldol reaction between acetaldehyde and D-glyceraldehyde 3-phosphate to generate 2-deoxy-D-ribose 5-phosphate. In Shewanella sp. (strain ANA-3), this protein is Deoxyribose-phosphate aldolase.